The following is a 162-amino-acid chain: Protein-export protein SecB (162 aa).

The protein belongs to the SecB family. As to quaternary structure, homotetramer, a dimer of dimers. One homotetramer interacts with 1 SecA dimer.

It localises to the cytoplasm. One of the proteins required for the normal export of preproteins out of the cell cytoplasm. It is a molecular chaperone that binds to a subset of precursor proteins, maintaining them in a translocation-competent state. It also specifically binds to its receptor SecA. This chain is Protein-export protein SecB, found in Pseudomonas savastanoi pv. phaseolicola (strain 1448A / Race 6) (Pseudomonas syringae pv. phaseolicola (strain 1448A / Race 6)).